Consider the following 270-residue polypeptide: Formamidopyrimidine-DNA glycosylase (270 aa).

The Schiff-base intermediate with DNA role is filled by P2. E3 functions as the Proton donor in the catalytic mechanism. K57 functions as the Proton donor; for beta-elimination activity in the catalytic mechanism. 3 residues coordinate DNA: H90, R109, and R151. The FPG-type zinc-finger motif lies at 236–270 (QVYGRGGKLCMVCSNRLKEVRLGQRSTVYCTQCQR). R260 serves as the catalytic Proton donor; for delta-elimination activity.

Belongs to the FPG family. As to quaternary structure, monomer. Zn(2+) is required as a cofactor.

It catalyses the reaction Hydrolysis of DNA containing ring-opened 7-methylguanine residues, releasing 2,6-diamino-4-hydroxy-5-(N-methyl)formamidopyrimidine.. It carries out the reaction 2'-deoxyribonucleotide-(2'-deoxyribose 5'-phosphate)-2'-deoxyribonucleotide-DNA = a 3'-end 2'-deoxyribonucleotide-(2,3-dehydro-2,3-deoxyribose 5'-phosphate)-DNA + a 5'-end 5'-phospho-2'-deoxyribonucleoside-DNA + H(+). Functionally, involved in base excision repair of DNA damaged by oxidation or by mutagenic agents. Acts as a DNA glycosylase that recognizes and removes damaged bases. Has a preference for oxidized purines, such as 7,8-dihydro-8-oxoguanine (8-oxoG). Has AP (apurinic/apyrimidinic) lyase activity and introduces nicks in the DNA strand. Cleaves the DNA backbone by beta-delta elimination to generate a single-strand break at the site of the removed base with both 3'- and 5'-phosphates. This chain is Formamidopyrimidine-DNA glycosylase, found in Idiomarina loihiensis (strain ATCC BAA-735 / DSM 15497 / L2-TR).